The chain runs to 565 residues: uncharacterized protein (565 aa).

A run of 5 helical transmembrane segments spans residues Phe4–Val26, Gly33–Ala55, Ser68–Leu90, Tyr97–Phe119, and Ile162–Leu184. RCK C-terminal domains are found at residues Pro210 to Glu295 and Val296 to Val379. A run of 5 helical transmembrane segments spans residues Leu389 to Gly411, Gly415 to Ile432, Leu453 to Thr472, Ile482 to Ile504, and Trp539 to Met561.

It belongs to the AAE transporter (TC 2.A.81) family.

The protein localises to the cell membrane. This is an uncharacterized protein from Bordetella bronchiseptica (strain ATCC BAA-588 / NCTC 13252 / RB50) (Alcaligenes bronchisepticus).